The chain runs to 177 residues: Large ribosomal subunit protein uL6 (177 aa).

It belongs to the universal ribosomal protein uL6 family. Part of the 50S ribosomal subunit.

Functionally, this protein binds to the 23S rRNA, and is important in its secondary structure. It is located near the subunit interface in the base of the L7/L12 stalk, and near the tRNA binding site of the peptidyltransferase center. In Acinetobacter baylyi (strain ATCC 33305 / BD413 / ADP1), this protein is Large ribosomal subunit protein uL6.